A 414-amino-acid polypeptide reads, in one-letter code: L-cysteine:1D-myo-inositol 2-amino-2-deoxy-alpha-D-glucopyranoside ligase (414 aa).

Cysteine 43 serves as a coordination point for Zn(2+). Residues 43–46 (CGIT), threonine 58, and 81–83 (NIT) each bind L-cysteinyl-5'-AMP. Positions 45–55 (ITPYDATHLGH) match the 'HIGH' region motif. The short motif at 189-194 (ERGGDP) is the 'ERGGDP' region element. Position 229 (tryptophan 229) interacts with L-cysteinyl-5'-AMP. Cysteine 233 is a binding site for Zn(2+). An L-cysteinyl-5'-AMP-binding site is contributed by 251–253 (GSD). Histidine 258 provides a ligand contact to Zn(2+). Isoleucine 285 contributes to the L-cysteinyl-5'-AMP binding site. The short motif at 291–295 (KMSKS) is the 'KMSKS' region element.

This sequence belongs to the class-I aminoacyl-tRNA synthetase family. MshC subfamily. In terms of assembly, monomer. Requires Zn(2+) as cofactor.

The catalysed reaction is 1D-myo-inositol 2-amino-2-deoxy-alpha-D-glucopyranoside + L-cysteine + ATP = 1D-myo-inositol 2-(L-cysteinylamino)-2-deoxy-alpha-D-glucopyranoside + AMP + diphosphate + H(+). In terms of biological role, catalyzes the ATP-dependent condensation of GlcN-Ins and L-cysteine to form L-Cys-GlcN-Ins. This chain is L-cysteine:1D-myo-inositol 2-amino-2-deoxy-alpha-D-glucopyranoside ligase (mshC), found in Mycobacterium bovis (strain ATCC BAA-935 / AF2122/97).